Consider the following 201-residue polypeptide: Small ribosomal subunit protein uS4c (201 aa).

The S4 RNA-binding domain maps to 90-153 (MRLDNVIFRL…SSQNLVKRYL (64 aa)).

The protein belongs to the universal ribosomal protein uS4 family. In terms of assembly, part of the 30S ribosomal subunit. Contacts protein S5. The interaction surface between S4 and S5 is involved in control of translational fidelity.

The protein resides in the plastid. It localises to the chloroplast. Functionally, one of the primary rRNA binding proteins, it binds directly to 16S rRNA where it nucleates assembly of the body of the 30S subunit. In terms of biological role, with S5 and S12 plays an important role in translational accuracy. The chain is Small ribosomal subunit protein uS4c (rps4) from Gracilaria tenuistipitata var. liui (Red alga).